We begin with the raw amino-acid sequence, 501 residues long: METNTMSQQEENQQIAARKVKLEALREAGVNPYPSGFKPDIDLASVSRANGNEMDPATLERVSVKVAGRIMLLRNFGKLTFATLQDESGRLQISAQRDVVGAELYSTVFRKIEVGDILGVEGHLFRTKVGELTVQVERFELLSKAVRPLPEKFHGLEDVETRYRQRYVDLIVNTEVREIFKTRSRVISRIRQFMEHRGFLEVETPMMHPIPGGATARPFVTHHNALDTDLYLRIAPELYLKRLIVGGFERVFEINRNFRNEGLSPRHNPEFTMMEFYQAYTDYRELMDFTEALVQDVVKDVNEGELTVAYQGQELDFSGPWARLTPAEAIVRYMEADAARITERGYLESLAESLGIKAETSWDDGMLLLTIFEEGVEHKLMAPTFIIDYPISVSPLSRRSDDNPDIAERFELFIAGREIANAFSELNDPADQASRFQKQVEAKDAGNEEAMHFDADYIRALEYGMPPTGGEGIGIDRLVMLLTDAANIREVLLFPQMKREG.

Residues E411 and E418 each contribute to the Mg(2+) site.

It belongs to the class-II aminoacyl-tRNA synthetase family. Homodimer. Mg(2+) is required as a cofactor.

The protein localises to the cytoplasm. The enzyme catalyses tRNA(Lys) + L-lysine + ATP = L-lysyl-tRNA(Lys) + AMP + diphosphate. This chain is Lysine--tRNA ligase, found in Magnetococcus marinus (strain ATCC BAA-1437 / JCM 17883 / MC-1).